The sequence spans 722 residues: MQGQTKSVSFDGREIKLTTGRFAPQAGGSVMIECGDTSVLVTATKSSGREGVDFLPLMCDYEERLYAAGRIPGSFMRREGRPPERATLISRLIDRPMRPLFPGWMRDDIQIVATCLSLDERVPADVLAVTGASMATLMAGIPFQGPMAAVRVGLLGDDFVLNPSYREIERGDLDLVVAGTPDGVVMVEAGANQLSEQDVIEAIDFGYEAITELINAQKEVLKESGIKQEMPKAPEIDDTISTYLDKNCTKSISEVLKNFDQTKEERDNKIEEIKISISAKIDGLKDDNAVKKSLSLNNKLLENSYKALTKKLMREQIIKEGKRVDGRELNEVRAIEADAAVLPNRVHGSALFQRGLTQVLSTATLGTPSDAQEMDDLNPNTDKTYIHHYNFPPYSVGETRPMRTPGRREVGHGALAERALIPVLPAKDTFPYVLRVVSEVLSSNGSTSMASVCGSTLALMDAGVPLKAPVGGAAMGLIKEGKEVRILTDIQGIEDFLGDMDFKVAGTEKGITALQMDMKITGLPIETIGEAINQALPARTHILGKMLDAIETPKDNLSPHAPRLLSFRIDPELIGTVIGPGGRTIKGITERTNTKIDIEDGGIVTIASHDGAAAEEAQRIIEGLTRKVHEGEIFPGSITRIIPIGAFVEILPGKEGMIHISQLSEARVEKVEDVVKVGDQVTVRVREIDNRGRINLTLRGVSQNGGMSNYPEPTPTPVAPLT.

2 residues coordinate Mg(2+): aspartate 495 and aspartate 501. The 60-residue stretch at 562 to 621 (PRLLSFRIDPELIGTVIGPGGRTIKGITERTNTKIDIEDGGIVTIASHDGAAAEEAQRII) folds into the KH domain. One can recognise an S1 motif domain in the interval 631-699 (GEIFPGSITR…NRGRINLTLR (69 aa)). A disordered region spans residues 700–722 (GVSQNGGMSNYPEPTPTPVAPLT). Positions 712–722 (EPTPTPVAPLT) are enriched in pro residues.

The protein belongs to the polyribonucleotide nucleotidyltransferase family. Mg(2+) is required as a cofactor.

Its subcellular location is the cytoplasm. It carries out the reaction RNA(n+1) + phosphate = RNA(n) + a ribonucleoside 5'-diphosphate. Its function is as follows. Involved in mRNA degradation. Catalyzes the phosphorolysis of single-stranded polyribonucleotides processively in the 3'- to 5'-direction. The protein is Polyribonucleotide nucleotidyltransferase of Prochlorococcus marinus (strain NATL1A).